Here is a 558-residue protein sequence, read N- to C-terminus: Potassium-transporting ATPase potassium-binding subunit 2 (558 aa).

A run of 12 helical transmembrane segments spans residues 1-21 (MSIVLFLIVFILLSLIVSRYL), 60-80 (IKHFLLFNGLMGGLSFVLLLI), 129-149 (VITFLMFTSAASGYAVCIAML), 169-189 (FIVRVLIPFALIISLFLISQG), 246-266 (WSNYAEALSMMLIPGSLVFLF), 281-301 (IMIFVAMFVMFIGFLVTCLYF), 326-346 (FGIGLSALFTTITTAFTTGTV), 353-373 (LTPLGGMVPMVLMMLNAVFGG), 376-396 (VGLMNMLIYVMLTVFICSLMI), 415-435 (IALSFLVHPLLILVFSALAFI), 485-505 (IVMLLARYIPIVLQILIVSSL), and 523-543 (LFFSSVLIIFIILLSGLTFLP).

It belongs to the KdpA family. In terms of assembly, the system is composed of three essential subunits: KdpA, KdpB and KdpC.

The protein resides in the cell membrane. Functionally, part of the high-affinity ATP-driven potassium transport (or Kdp) system, which catalyzes the hydrolysis of ATP coupled with the electrogenic transport of potassium into the cytoplasm. This subunit binds the extracellular potassium ions and delivers the ions to the membrane domain of KdpB through an intramembrane tunnel. The chain is Potassium-transporting ATPase potassium-binding subunit 2 from Staphylococcus aureus (strain Mu50 / ATCC 700699).